Here is a 337-residue protein sequence, read N- to C-terminus: Ketol-acid reductoisomerase (NADP(+)) (337 aa).

The KARI N-terminal Rossmann domain occupies 1 to 181 (MKIYYEHDAD…GAARAGVIAT (181 aa)). NADP(+)-binding positions include 24–27 (FGSQ), R47, S50, S52, and 82–85 (DEKQ). The active site involves H107. G133 contacts NADP(+). Positions 182–328 (TFKDETETDL…SRLRAMMPFL (147 aa)) constitute a KARI C-terminal knotted domain. Positions 190, 194, 226, and 230 each coordinate Mg(2+). S251 contributes to the substrate binding site.

It belongs to the ketol-acid reductoisomerase family. The cofactor is Mg(2+).

The catalysed reaction is (2R)-2,3-dihydroxy-3-methylbutanoate + NADP(+) = (2S)-2-acetolactate + NADPH + H(+). It catalyses the reaction (2R,3R)-2,3-dihydroxy-3-methylpentanoate + NADP(+) = (S)-2-ethyl-2-hydroxy-3-oxobutanoate + NADPH + H(+). The protein operates within amino-acid biosynthesis; L-isoleucine biosynthesis; L-isoleucine from 2-oxobutanoate: step 2/4. It functions in the pathway amino-acid biosynthesis; L-valine biosynthesis; L-valine from pyruvate: step 2/4. In terms of biological role, involved in the biosynthesis of branched-chain amino acids (BCAA). Catalyzes an alkyl-migration followed by a ketol-acid reduction of (S)-2-acetolactate (S2AL) to yield (R)-2,3-dihydroxy-isovalerate. In the isomerase reaction, S2AL is rearranged via a Mg-dependent methyl migration to produce 3-hydroxy-3-methyl-2-ketobutyrate (HMKB). In the reductase reaction, this 2-ketoacid undergoes a metal-dependent reduction by NADPH to yield (R)-2,3-dihydroxy-isovalerate. This Thermus thermophilus (strain ATCC BAA-163 / DSM 7039 / HB27) protein is Ketol-acid reductoisomerase (NADP(+)).